The sequence spans 161 residues: Large ribosomal subunit protein bL21m (161 aa).

The transit peptide at 1-35 (MLQLKFIWPVARITPIYRPFTSHPFRNLATSSSIS) directs the protein to the mitochondrion.

The protein belongs to the bacterial ribosomal protein bL21 family. In terms of assembly, component of the mitochondrial large ribosomal subunit (mt-LSU). Mature yeast 74S mitochondrial ribosomes consist of a small (37S) and a large (54S) subunit. The 37S small subunit contains a 15S ribosomal RNA (15S mt-rRNA) and 34 different proteins. The 54S large subunit contains a 21S rRNA (21S mt-rRNA) and 46 different proteins.

It is found in the mitochondrion. In terms of biological role, component of the mitochondrial ribosome (mitoribosome), a dedicated translation machinery responsible for the synthesis of mitochondrial genome-encoded proteins, including at least some of the essential transmembrane subunits of the mitochondrial respiratory chain. The mitoribosomes are attached to the mitochondrial inner membrane and translation products are cotranslationally integrated into the membrane. The chain is Large ribosomal subunit protein bL21m (MRPL49) from Saccharomyces cerevisiae (strain ATCC 204508 / S288c) (Baker's yeast).